The sequence spans 270 residues: MCERSLYRAGYVGSLLNLQSPDSFYFSNLRPNGGQLAALPPISYPRGALPWAATPASCAPAQPAGATAFGGFSQPYLAGSGPLGLQPPTAKDGPEEQAKFYAPEAAAGPEERGRTRPSFAPESSLAPAVAALKAAKYDYAGVGRATPGSTTLLQGAPCAPGFKDDTKGPLNLNMTVQAAGVASCLRPSLPDGLPWGAAPGRARKKRKPYTKQQIAELENEFLVNEFINRQKRKELSNRLNLSDQQVKIWFQNRRMKKKRVVLREQALALY.

The segment at 102–122 is disordered; the sequence is APEAAAGPEERGRTRPSFAPE. Positions 202-261 form a DNA-binding region, homeobox; it reads ARKKRKPYTKQQIAELENEFLVNEFINRQKRKELSNRLNLSDQQVKIWFQNRRMKKKRVV.

It belongs to the Abd-B homeobox family.

It is found in the nucleus. Sequence-specific transcription factor which is part of a developmental regulatory system that provides cells with specific positional identities on the anterior-posterior axis. The polypeptide is Homeobox protein Hox-D12 (HOXD12) (Homo sapiens (Human)).